The primary structure comprises 165 residues: ATP synthase subunit delta, mitochondrial (165 aa).

A mitochondrion-targeting transit peptide spans 1–27 (MNSLRIARAALRVRPTAVRAPLQRRGY).

Belongs to the ATPase epsilon chain family. As to quaternary structure, F-type ATPases have 2 components, CF(1) - the catalytic core - and CF(0) - the membrane proton channel. CF(1) has five subunits: alpha(3), beta(3), gamma(1), delta(1), epsilon(1). CF(0) has three main subunits: a, b and c.

Its subcellular location is the mitochondrion. It is found in the mitochondrion inner membrane. Its function is as follows. Mitochondrial membrane ATP synthase (F(1)F(0) ATP synthase or Complex V) produces ATP from ADP in the presence of a proton gradient across the membrane which is generated by electron transport complexes of the respiratory chain. F-type ATPases consist of two structural domains, F(1) - containing the extramembraneous catalytic core, and F(0) - containing the membrane proton channel, linked together by a central stalk and a peripheral stalk. During catalysis, ATP turnover in the catalytic domain of F(1) is coupled via a rotary mechanism of the central stalk subunits to proton translocation. Part of the complex F(1) domain and of the central stalk which is part of the complex rotary element. Rotation of the central stalk against the surrounding alpha(3)beta(3) subunits leads to hydrolysis of ATP in three separate catalytic sites on the beta subunits. The protein is ATP synthase subunit delta, mitochondrial (des) of Neurospora crassa (strain ATCC 24698 / 74-OR23-1A / CBS 708.71 / DSM 1257 / FGSC 987).